A 330-amino-acid chain; its full sequence is Zinc finger protein Gfi-1b (330 aa).

Residues 1 to 20 (MPRSFLVKSKKAHTYHQPRA) are SNAG domain. 2 disordered regions span residues 1–21 (MPRS…PRAQ) and 75–99 (MASA…SESP). Lysine 8 is modified (N6,N6-dimethyllysine). The interaction with ARIH2 stretch occupies residues 91–330 (GESPLSESPP…RHRESQHNLK (240 aa)). 6 consecutive C2H2-type zinc fingers follow at residues 163 to 186 (YHCV…RRSH), 192 to 214 (FACD…THVH), 220 to 242 (FECR…LLIH), 248 to 270 (YPCQ…TYIH), 276 to 298 (HKCQ…SRKH), and 304 to 327 (FSCE…ESQH). The mediates interaction with GATA1 stretch occupies residues 164–330 (HCVKCNKVFS…RHRESQHNLK (167 aa)).

As to quaternary structure, interacts with histone methyltransferases EHMT2 and SUV39H1. Interacts with ARIH2 (via RING-type 2) and with RUNX1T1. Forms a complex with GATA1. Component of a RCOR-GFI-KDM1A-HDAC complex. Interacts directly with RCOR1, KDM1A and HDAC2. Methylation at Lys-8 in the SNAG domain seems required for the recruitment of the corepressor complex. In terms of tissue distribution, expressed in bone marrow and in spleen. Detected in hematopoietic stem cells, erythroblasts, and megakaryocytes. Expressed in thymocytes.

The protein localises to the nucleus. Functionally, essential proto-oncogenic transcriptional regulator necessary for development and differentiation of erythroid and megakaryocytic lineages. Component of a RCOR-GFI-KDM1A-HDAC complex that suppresses, via histone deacetylase (HDAC) recruitment, a number of genes implicated in multilineage blood cell development and controls hematopoietic differentiation. Transcriptional repressor or activator depending on both promoter and cell type context; represses promoter activity of SOCS1 and SOCS3 and thus, may regulate cytokine signaling pathways. Cooperates with GATA1 to repress target gene transcription, such as the apoptosis regulator BCL2L1; GFI1B silencing in leukemic cell lines markedly increase apoptosis rate. Inhibits down-regulation of MYC and MYB as well as the cyclin-dependent kinase inhibitor CDKN1A/P21WAF1 in IL6-treated myelomonocytic cells. Represses expression of GATA3 in T-cell lymphomas and inhibits GATA1-mediated transcription; as GATA1 also mediates erythroid GFI1B transcription, both GATA1 and GFI1B participate in a feedback regulatory pathway controlling the expression of GFI1B gene in erythroid cells. Suppresses GATA1-mediated stimulation of GFI1B promoter through protein interaction. Binds to gamma-satellite DNA and to its own promoter, auto-repressing its own expression. Alters histone methylation by recruiting histone methyltransferase to target genes promoters. Plays a role in heterochromatin formation. The protein is Zinc finger protein Gfi-1b (Gfi1b) of Mus musculus (Mouse).